We begin with the raw amino-acid sequence, 89 residues long: Signal recognition particle 19 kDa protein (89 aa).

The protein belongs to the SRP19 family. As to quaternary structure, part of the signal recognition particle protein translocation system, which is composed of SRP and FtsY. Archaeal SRP consists of a 7S RNA molecule of 300 nucleotides and two protein subunits: SRP54 and SRP19.

The protein resides in the cytoplasm. Functionally, involved in targeting and insertion of nascent membrane proteins into the cytoplasmic membrane. Binds directly to 7S RNA and mediates binding of the 54 kDa subunit of the SRP. The polypeptide is Signal recognition particle 19 kDa protein (Methanobrevibacter smithii (strain ATCC 35061 / DSM 861 / OCM 144 / PS)).